The sequence spans 394 residues: 3-hydroxybenzoate 6-hydroxylase 1 (394 aa).

The protein belongs to the 3-hydroxybenzoate 6-hydroxylase family. Homotrimer. The cofactor is FAD.

It catalyses the reaction 3-hydroxybenzoate + NADH + O2 + H(+) = 2,5-dihydroxybenzoate + NAD(+) + H2O. Its activity is regulated as follows. Inhibited by manganese, copper, mercury, and iron ions. Catalyzes the NAD- or NADP-dependent conversion of 3-hydroxybenzoate to gentisate. The affinity of the enzyme toward NAD is twice as high as for NADP. The enzyme shows higher specific activities against the intermediates in the degradation of 2,5-xylenol and 3,5-xylenol, 3-hydroxy-4-methylbenzoate and 3-hydroxy-5-methylbenzoate, respectively, than for 3-hydroxybenzoate. It also shows activity against 3-substituted benzoates. The protein is 3-hydroxybenzoate 6-hydroxylase 1 (xlnD) of Aquipseudomonas alcaligenes (Pseudomonas alcaligenes).